Here is a 110-residue protein sequence, read N- to C-terminus: U1-lycotoxin-Ls1kk (110 aa).

Positions 1-20 (MKFVLLFGVLLVTLFSYSSA) are cleaved as a signal peptide. Positions 21–44 (EMFDDFDQADEDELLSLIEKEEAR) are excised as a propeptide. 4 disulfides stabilise this stretch: cysteine 47–cysteine 62, cysteine 54–cysteine 71, cysteine 61–cysteine 89, and cysteine 73–cysteine 87.

This sequence belongs to the neurotoxin 19 (CSTX) family. 03 subfamily. Expressed by the venom gland.

It is found in the secreted. The protein is U1-lycotoxin-Ls1kk of Lycosa singoriensis (Wolf spider).